The sequence spans 360 residues: MDFSTNGSEESELYHAQIHLYKHIYNFVSSMALKSAVELGIADAIHNHGKPMTLPELASSLKLHPSKVNILYRFLRLLTHNGFFAKTTVKSNGEEEETAYVLTPSSKLLVSGKSTCLSSVVKGALHPISLDLWGVSKKWFHEDKEQTLFECATGENYWDFLNKDSDYLSIFQDAMAADSRLFKLAIQENKHVFEGLESLVDVAGGTGGVAKLIHEAFPHIKCTVFDQPQVVGNLTGNENLNFVSGDMFKSVPSADAVLLKWVLHDWNDELSLKILKKSKEAISHKGKDGKVIIIDISIDDNSDDHGLTELQLEYDVVMLTMFLGKERTKKEWEKLIYDAGFSRYKITPICGFKSLIEVYP.

S-adenosyl-L-methionine contacts are provided by residues valine 202–glycine 205, aspartate 226, aspartate 226–glutamine 227, aspartate 246–methionine 247, and lysine 260. Catalysis depends on histidine 264, which acts as the Proton acceptor.

It belongs to the class I-like SAM-binding methyltransferase superfamily. Cation-independent O-methyltransferase family. COMT subfamily.

The enzyme catalyses (+)-6a-hydroxymaackiain + S-adenosyl-L-methionine = (+)-pisatin + S-adenosyl-L-homocysteine + H(+). Its function is as follows. 3-O-methyltransferase involved in the phytoalexin pisatin biosynthesis. Can use (+)-6a-hydroxymaackiain, (+)-maackiain and with a lower activity (+)-medicarpin and 2,7,4'-trihydroxyisoflavanone as substrates, but not (-)-6a-hydroxymaackiain, daidzein, formononetin or isoliquiritigenin. The chain is (+)-6a-hydroxymaackiain 3-O-methyltransferase 2 (HMM2) from Pisum sativum (Garden pea).